Consider the following 92-residue polypeptide: Small ribosomal subunit protein uS19 (92 aa).

Belongs to the universal ribosomal protein uS19 family.

Protein S19 forms a complex with S13 that binds strongly to the 16S ribosomal RNA. The chain is Small ribosomal subunit protein uS19 from Acaryochloris marina (strain MBIC 11017).